We begin with the raw amino-acid sequence, 218 residues long: Ribose-5-phosphate isomerase A (218 aa).

Residues 28–31 (TGST), 81–84 (DGAD), and 94–97 (KGGG) each bind substrate. The Proton acceptor role is filled by glutamate 103. Lysine 121 is a binding site for substrate.

Belongs to the ribose 5-phosphate isomerase family. As to quaternary structure, homodimer.

The enzyme catalyses aldehydo-D-ribose 5-phosphate = D-ribulose 5-phosphate. The protein operates within carbohydrate degradation; pentose phosphate pathway; D-ribose 5-phosphate from D-ribulose 5-phosphate (non-oxidative stage): step 1/1. In terms of biological role, catalyzes the reversible conversion of ribose-5-phosphate to ribulose 5-phosphate. The protein is Ribose-5-phosphate isomerase A of Vibrio parahaemolyticus serotype O3:K6 (strain RIMD 2210633).